The sequence spans 1639 residues: RIMS-binding protein 3A (1639 aa).

Disordered stretches follow at residues 1–22 (MAKD…SSPA), 215–240 (GSPD…CHAP), and 295–364 (SLDS…LTPS). Residues 21-143 (PAAAVLENQR…ELQRQLAEEL (123 aa)) are a coiled coil. Positions 326–339 (SPPPSPLPPPPPPS) are enriched in pro residues. Coiled-coil stretches lie at residues 409–442 (QADE…QETN) and 480–619 (LAKD…AEEN). Residues 697 to 811 (CRPGHPPEQP…DRDTASEVDD (115 aa)) form a disordered region. Composition is skewed to polar residues over residues 707-718 (WETSQMPESQVK) and 761-775 (SVPQ…SQPL). Over residues 776-790 (SKKTSSQSNSSSEGS) the composition is skewed to low complexity. The 68-residue stretch at 832-899 (PKLKIFMAQY…PSNFVEQIPD (68 aa)) folds into the SH3 1 domain. Fibronectin type-III domains follow at residues 995 to 1083 (APMQ…TLLA) and 1088 to 1184 (PPLD…IPED). Disordered regions lie at residues 1251 to 1273 (PRRQ…GAGS) and 1292 to 1330 (QKSP…FIHL). The span at 1293–1305 (KSPQNHRPPSVSD) shows a compositional bias: polar residues. SH3 domains follow at residues 1452-1520 (TPAR…EMEV) and 1569-1636 (WTPK…HMSL).

Belongs to the RIMBP family. As to quaternary structure, interacts with LRGUK (via guanylate kinase-like domain). Interacts (via C-terminus) with HOOK1 (via coiled-coil region).

It localises to the cytoplasm. The protein resides in the cytoskeleton. In terms of biological role, probable component of the manchette, a microtubule-based structure which plays a key role in sperm head morphogenesis during late stages of sperm development. This is RIMS-binding protein 3A (RIMBP3) from Homo sapiens (Human).